A 451-amino-acid chain; its full sequence is Phenylalanine--tRNA ligase, mitochondrial (451 aa).

Residues 157–160 (SAHQ), arginine 179, 186–188 (QHY), and 193–195 (QLE) contribute to the substrate site. Position 202 is an N6-acetyllysine (lysine 202). Residues glutamate 287 and phenylalanine 312 each contribute to the substrate site. Residues 358-450 (SKYPAVINDI…AVQLLGVEGR (93 aa)) enclose the FDX-ACB domain.

The protein belongs to the class-II aminoacyl-tRNA synthetase family. As to quaternary structure, monomer.

Its subcellular location is the mitochondrion matrix. The protein localises to the mitochondrion. It carries out the reaction tRNA(Phe) + L-phenylalanine + ATP = L-phenylalanyl-tRNA(Phe) + AMP + diphosphate + H(+). Its function is as follows. Is responsible for the charging of tRNA(Phe) with phenylalanine in mitochondrial translation. To a lesser extent, also catalyzes direct attachment of m-Tyr (an oxidized version of Phe) to tRNA(Phe), thereby opening the way for delivery of the misacylated tRNA to the ribosome and incorporation of ROS-damaged amino acid into proteins. This is Phenylalanine--tRNA ligase, mitochondrial (FARS2) from Homo sapiens (Human).